Consider the following 369-residue polypeptide: MNTKPLRHGYTTGACAAAAAKGAARMLREQRPVEEVELVLPKGERVAFRLHGQEFDDSAASCFVVKDAGDDPDVTNGAEIHARVRREPLNRSGARTMVFVDGGKGVGTVTKPGLGVGVGNPAINPVPMRMITEGVKEEFSVVCLPQVLHVTISIPNGEELAKKTLNARLGIVGGLSILGTTGIVRPISAKAWTDTLDAALDVARACGCETIVLSTGRTSELVAIHAGIGDRGPGTGKTLPEEAYVMMGDHVGYALRACARKGVRHVILVGQFAKLLKIACGHEQTHVSSSELDLQMLAEWLHELGSRSPVPGPWSRYNTARQVLEESGNDSLFMELVCTRARDAARRLAPSLDIKVLLAGYDSTVLYFG.

The protein belongs to the CbiD family.

It catalyses the reaction Co-precorrin-5B + S-adenosyl-L-methionine = Co-precorrin-6A + S-adenosyl-L-homocysteine. It participates in cofactor biosynthesis; adenosylcobalamin biosynthesis; cob(II)yrinate a,c-diamide from sirohydrochlorin (anaerobic route): step 6/10. In terms of biological role, catalyzes the methylation of C-1 in cobalt-precorrin-5B to form cobalt-precorrin-6A. The protein is Cobalt-precorrin-5B C(1)-methyltransferase of Geobacter metallireducens (strain ATCC 53774 / DSM 7210 / GS-15).